The chain runs to 209 residues: GTP cyclohydrolase 1 (209 aa).

Zn(2+) contacts are provided by C100, H103, and C171.

The protein belongs to the GTP cyclohydrolase I family. Toroid-shaped homodecamer, composed of two pentamers of five dimers.

It carries out the reaction GTP + H2O = 7,8-dihydroneopterin 3'-triphosphate + formate + H(+). It participates in cofactor biosynthesis; 7,8-dihydroneopterin triphosphate biosynthesis; 7,8-dihydroneopterin triphosphate from GTP: step 1/1. The protein is GTP cyclohydrolase 1 of Ralstonia nicotianae (strain ATCC BAA-1114 / GMI1000) (Ralstonia solanacearum).